Here is a 468-residue protein sequence, read N- to C-terminus: Heparan-sulfate 6-O-sulfotransferase 2 (468 aa).

Over 1-9 (MDGKSNYSR) the chain is Cytoplasmic. The helical; Signal-anchor for type II membrane protein transmembrane segment at 10-30 (LLIALLMILFFGGIVLQYICS) threads the bilayer. At 31–468 (TSDWQLLHLA…DYLENVEQWR (438 aa)) the chain is on the lumenal side. A glycan (N-linked (GlcNAc...) asparagine) is linked at N79. 103 to 111 (HIQKTGGTT) contributes to the 3'-phosphoadenylyl sulfate binding site. Residues 133–134 (KK), R150, W155, and H160 each bind substrate. The Proton acceptor role is filled by H160. 3'-phosphoadenylyl sulfate contacts are provided by R197 and S205. Substrate contacts are provided by H209 and W216. Residue N276 is glycosylated (N-linked (GlcNAc...) asparagine). 329 to 331 (TQL) is a 3'-phosphoadenylyl sulfate binding site. Residue N332 is glycosylated (N-linked (GlcNAc...) asparagine). 335 to 336 (RA) provides a ligand contact to 3'-phosphoadenylyl sulfate. The disordered stretch occupies residues 409–447 (FKPTKEPPMTEQSPAFAEEKQADAERTLESETEGQVEEN). A compositionally biased stretch (basic and acidic residues) spans 425–437 (AEEKQADAERTLE). A compositionally biased stretch (acidic residues) spans 438 to 447 (SETEGQVEEN).

This sequence belongs to the sulfotransferase 6 family. Expressed ubiquitously during gastrulation. During early somitogenesis, strong expression in head and presumptive brain. During mid-somitogenesis, strong expression in eye, hindbrain and somitic boundaries and weak expression in tail bud. During late somitogenesis, strong expression in eye, hindbrain, branchial arch primordia, spinal cord and ventral medial somites. At 24 hours post-fertilization (hpf), strong expression throughout the head, with expression receeding from the trunk spinal cord, ventral medial somites and somitic boundaries; expressed in cells surrounding vascular structures of the dorsal aorta and caudal vein in the tail. At 36 hpf, expressed in lens, optic stalk, hindbrain and pectoral fin. At 48 hpf, expressed in eye, brain, otic vesicle and branchial arches.

Its subcellular location is the membrane. The catalysed reaction is alpha-D-glucosaminyl-[heparan sulfate](n) + 3'-phosphoadenylyl sulfate = 6-sulfo-alpha-D-glucosaminyl-[heparan sulfate](n) + adenosine 3',5'-bisphosphate + H(+). Functionally, 6-O-sulfation enzyme which catalyzes the transfer of sulfate from 3'-phosphoadenosine 5'-phosphosulfate (PAPS) to position 6 of the N-sulfoglucosamine residue (GlcNS) of heparan sulfate. Required for muscle development and angiogenesis. The sequence is that of Heparan-sulfate 6-O-sulfotransferase 2 (hs6st2) from Danio rerio (Zebrafish).